A 632-amino-acid polypeptide reads, in one-letter code: tRNA uridine 5-carboxymethylaminomethyl modification enzyme MnmG (632 aa).

Residues 15–20 (GAGHAG), Ile127, and Ser182 contribute to the FAD site. 276 to 290 (GPRYCPSIEDKIVRF) is a binding site for NAD(+). Gln373 is a binding site for FAD.

The protein belongs to the MnmG family. Homodimer. Heterotetramer of two MnmE and two MnmG subunits. FAD serves as cofactor.

The protein localises to the cytoplasm. Its function is as follows. NAD-binding protein involved in the addition of a carboxymethylaminomethyl (cmnm) group at the wobble position (U34) of certain tRNAs, forming tRNA-cmnm(5)s(2)U34. The sequence is that of tRNA uridine 5-carboxymethylaminomethyl modification enzyme MnmG from Streptococcus pyogenes serotype M3 (strain SSI-1).